A 472-amino-acid chain; its full sequence is Protein c-ets-2-A (472 aa).

The PNT domain maps to 85–170; it reads NTFNGFAKKR…EHLEEMMKEH (86 aa). A DNA-binding region (ETS) is located at residues 366-446; sequence IQLWQFLLEL…SGKRYVYRFV (81 aa).

Belongs to the ETS family.

The protein localises to the nucleus. Probable transcription factor. In Xenopus laevis (African clawed frog), this protein is Protein c-ets-2-A (ets2-a).